A 513-amino-acid chain; its full sequence is Cytochrome P450 monooxygenase ARMGADRAFT_1018418 (513 aa).

Residues 1-21 (MTHASSAWFLAAVVIVTFIVV) form a helical membrane-spanning segment. Cysteine 435 contacts heme. N-linked (GlcNAc...) asparagine glycosylation occurs at asparagine 442.

It belongs to the cytochrome P450 family. Requires heme as cofactor.

Its subcellular location is the membrane. The protein operates within secondary metabolite biosynthesis. Cytochrome P450 monooxygenase, part of the gene cluster that mediates the biosynthesis of melleolides, a range of antifungal and phytotoxic polyketide derivatives composed of an orsellinic acid (OA) moiety esterified to various sesquiterpene alcohols. The first step in melleolides biosynthesis is performed by the delta(6)-protoilludene synthase PRO1 which catalyzes the cyclization of farnesyl diphosphate to protoilludene. The orsellinic acid synthase armB produces OA by condensing acetyl-CoA with 3 malonyl-CoA units in a three-round chain elongation reaction folowed by a C2-C7 ring closure. ArmB further catalyzes the trans-esterification of OA to the various sesquiterpene alcohols resulting from the hydroxylation of protoilludene. The melleolides cluster also includes 5 cytochrome P450 monooxygenases, 4 NAD(+)-dependent oxidoreductases, one flavin-dependent oxidoreductase, and one O-methyltransferase. The cytochrome P450 monooxygenases may be involved in protoilludene hydroxylation to elaborate melleolides with multiple alcohol groups, such as melleolide D, which carries alcohol functionalities at C-4, C-5, C-10, and C-13. The role of the NAD(+)-dependent enzymes remains unknown. Numerous melleolides, including arnamial, show 5'-O-methylation of the aromatic moiety which may be catalyzed by the methyltransferase encoded in the cluster. The flavin-dependent oxidoreductase might represent the dehydrogenase yielding the aldehyde in position 1 of arnamial and other melleolides. Finally, several halogenase localized outside of the cluster, are able to catalyze the transfer of a single chlorine atom to the melleolide backbone, resulting in a 6'-chloromelleolide product. The protein is Cytochrome P450 monooxygenase ARMGADRAFT_1018418 of Armillaria gallica (Bulbous honey fungus).